We begin with the raw amino-acid sequence, 279 residues long: Movement protein (279 aa).

A disordered region spans residues 246-279 (SESEELNVESPPAAIGSSSASRSEAFRPQVVNGL). Positions 254–268 (ESPPAAIGSSSASRS) are enriched in low complexity.

It belongs to the cucumovirus movement protein family.

Its subcellular location is the host cell junction. It localises to the host plasmodesma. In terms of biological role, transports viral genome to neighboring plant cells directly through plasmosdesmata, without any budding. The movement protein allows efficient cell to cell propagation, by bypassing the host cell wall barrier. Acts by forming a tubular structure at the host plasmodesmata, enlarging it enough to allow free passage of virion capsids. The sequence is that of Movement protein from Cucumis sativus (Cucumber).